The chain runs to 130 residues: Small ribosomal subunit protein uS11 (130 aa).

Belongs to the universal ribosomal protein uS11 family. As to quaternary structure, part of the 30S ribosomal subunit. Interacts with proteins S7 and S18. Binds to IF-3.

Functionally, located on the platform of the 30S subunit, it bridges several disparate RNA helices of the 16S rRNA. Forms part of the Shine-Dalgarno cleft in the 70S ribosome. The chain is Small ribosomal subunit protein uS11 from Syntrophomonas wolfei subsp. wolfei (strain DSM 2245B / Goettingen).